We begin with the raw amino-acid sequence, 109 residues long: Small serum protein 2 (109 aa).

The signal sequence occupies residues 1–19 (MRVFFSLIIFSFMLATCQG). 5 cysteine pairs are disulfide-bonded: C21–C72, C39–C64, C59–C93, C62–C71, and C84–C107.

Forms a stable, non-covalent complex with serotriflin.

It is found in the secreted. May serve as a self-defense protein against the toxic effects of the snake venom during accidental envenomation. Does not show inhibitory activity towards brevilysin H6. The chain is Small serum protein 2 from Protobothrops flavoviridis (Habu).